Reading from the N-terminus, the 121-residue chain is Non-structural protein 8 (121 aa).

A signal peptide spans 1–15 (MKLLIVFGLLTSVYC). One can recognise an SARS ORF8 Ig-like domain in the interval 19-121 (ECSIQECCEN…HDVRVVLDFI (103 aa)). 3 cysteine pairs are disulfide-bonded: cysteine 25/cysteine 90, cysteine 37/cysteine 102, and cysteine 61/cysteine 83.

In Rhinolophus macrotis (Big-eared horseshoe bat), this protein is Non-structural protein 8.